The following is a 135-amino-acid chain: Small ribosomal subunit protein uS11 (135 aa).

It belongs to the universal ribosomal protein uS11 family. In terms of assembly, part of the 30S ribosomal subunit. Interacts with proteins S7 and S18. Binds to IF-3.

Located on the platform of the 30S subunit, it bridges several disparate RNA helices of the 16S rRNA. Forms part of the Shine-Dalgarno cleft in the 70S ribosome. This Corynebacterium urealyticum (strain ATCC 43042 / DSM 7109) protein is Small ribosomal subunit protein uS11.